The chain runs to 570 residues: Hydroxylamine reductase (570 aa).

Positions 5, 8, 17, and 23 each coordinate [4Fe-4S] cluster. 8 residues coordinate hybrid [4Fe-2O-2S] cluster: His-266, Glu-290, Cys-334, Cys-425, Cys-453, Cys-478, Glu-513, and Lys-515. Cysteine persulfide is present on Cys-425.

The protein belongs to the HCP family. [4Fe-4S] cluster serves as cofactor. Requires hybrid [4Fe-2O-2S] cluster as cofactor.

The protein resides in the cytoplasm. The catalysed reaction is A + NH4(+) + H2O = hydroxylamine + AH2 + H(+). Its function is as follows. Catalyzes the reduction of hydroxylamine to form NH(3) and H(2)O. The protein is Hydroxylamine reductase of Clostridium botulinum (strain Langeland / NCTC 10281 / Type F).